We begin with the raw amino-acid sequence, 428 residues long: 3-phosphoshikimate 1-carboxyvinyltransferase (428 aa).

3-phosphoshikimate-binding residues include Lys21, Ser22, and Arg26. Lys21 is a binding site for phosphoenolpyruvate. Phosphoenolpyruvate contacts are provided by Gly94 and Arg122. 3-phosphoshikimate contacts are provided by Ser166, Ser167, Gln168, Ser194, Asp306, and Lys333. Gln168 contacts phosphoenolpyruvate. The active-site Proton acceptor is the Asp306. Phosphoenolpyruvate-binding residues include Arg337, Arg379, and Lys405.

It belongs to the EPSP synthase family. Monomer.

Its subcellular location is the cytoplasm. The enzyme catalyses 3-phosphoshikimate + phosphoenolpyruvate = 5-O-(1-carboxyvinyl)-3-phosphoshikimate + phosphate. It participates in metabolic intermediate biosynthesis; chorismate biosynthesis; chorismate from D-erythrose 4-phosphate and phosphoenolpyruvate: step 6/7. Functionally, catalyzes the transfer of the enolpyruvyl moiety of phosphoenolpyruvate (PEP) to the 5-hydroxyl of shikimate-3-phosphate (S3P) to produce enolpyruvyl shikimate-3-phosphate and inorganic phosphate. This Clostridium acetobutylicum (strain ATCC 824 / DSM 792 / JCM 1419 / IAM 19013 / LMG 5710 / NBRC 13948 / NRRL B-527 / VKM B-1787 / 2291 / W) protein is 3-phosphoshikimate 1-carboxyvinyltransferase.